The following is a 111-amino-acid chain: Somatostatin-1B (111 aa).

The N-terminal stretch at 1-19 (MQLLSSLVSLLLVLYSVRA) is a signal peptide. Positions 20-87 (AAVLPVEERN…RLEERAVYNR (68 aa)) are excised as a propeptide. A disulfide bond links Cys100 and Cys111.

Belongs to the somatostatin family.

It is found in the secreted. Somatostatin inhibits the release of somatotropin. The protein is Somatostatin-1B (sst1b) of Carassius auratus (Goldfish).